The chain runs to 403 residues: D-galactonate dehydratase family member ManD (403 aa).

2 residues coordinate substrate: Asn37 and His122. The active-site Proton donor/acceptor is Tyr159. Asp211 lines the Mg(2+) pocket. Residue His213 is the Proton donor/acceptor of the active site. Mg(2+)-binding residues include Glu237 and Glu263. 5 residues coordinate substrate: Glu263, Arg284, His313, Asp317, and Glu340.

This sequence belongs to the mandelate racemase/muconate lactonizing enzyme family. GalD subfamily. Mg(2+) is required as a cofactor.

It carries out the reaction D-mannonate = 2-dehydro-3-deoxy-D-gluconate + H2O. The enzyme catalyses D-gluconate = 2-dehydro-3-deoxy-D-gluconate + H2O. Its function is as follows. Has low dehydratase activity with D-mannonate and D-gluconate, suggesting that these are not physiological substrates and that it has no significant role in the in vivo degradation of these compounds. Has no detectable activity with a panel of 70 other acid sugars (in vitro). This Chromohalobacter salexigens (strain ATCC BAA-138 / DSM 3043 / CIP 106854 / NCIMB 13768 / 1H11) protein is D-galactonate dehydratase family member ManD (manD).